Consider the following 274-residue polypeptide: Formamidopyrimidine-DNA glycosylase (274 aa).

The active-site Schiff-base intermediate with DNA is proline 2. Glutamate 3 serves as the catalytic Proton donor. Lysine 58 functions as the Proton donor; for beta-elimination activity in the catalytic mechanism. DNA is bound by residues histidine 91, arginine 110, and lysine 152. An FPG-type zinc finger spans residues 237 to 271 (KVYGRKNLPCLVCENKIETVVIAGRHSAFCPHCQP). The Proton donor; for delta-elimination activity role is filled by arginine 261.

This sequence belongs to the FPG family. In terms of assembly, monomer. Requires Zn(2+) as cofactor.

The enzyme catalyses Hydrolysis of DNA containing ring-opened 7-methylguanine residues, releasing 2,6-diamino-4-hydroxy-5-(N-methyl)formamidopyrimidine.. It catalyses the reaction 2'-deoxyribonucleotide-(2'-deoxyribose 5'-phosphate)-2'-deoxyribonucleotide-DNA = a 3'-end 2'-deoxyribonucleotide-(2,3-dehydro-2,3-deoxyribose 5'-phosphate)-DNA + a 5'-end 5'-phospho-2'-deoxyribonucleoside-DNA + H(+). Its function is as follows. Involved in base excision repair of DNA damaged by oxidation or by mutagenic agents. Acts as a DNA glycosylase that recognizes and removes damaged bases. Has a preference for oxidized purines, such as 7,8-dihydro-8-oxoguanine (8-oxoG). Has AP (apurinic/apyrimidinic) lyase activity and introduces nicks in the DNA strand. Cleaves the DNA backbone by beta-delta elimination to generate a single-strand break at the site of the removed base with both 3'- and 5'-phosphates. The protein is Formamidopyrimidine-DNA glycosylase of Legionella pneumophila (strain Lens).